The chain runs to 530 residues: uncharacterized protein (530 aa).

Composition is skewed to polar residues over residues 60-74 and 92-103; these read LNES…SSTP and GQGTSRPLPTLS. Disordered regions lie at residues 60-103 and 121-155; these read LNES…PTLS and ASST…GLGN. Over residues 131-142 the composition is skewed to basic and acidic residues; the sequence is PDPRDAPREGSF.

This is an uncharacterized protein from Mus musculus (Mouse).